A 427-amino-acid chain; its full sequence is UPF0597 protein CD630_32320 (427 aa).

Belongs to the UPF0597 family.

The sequence is that of UPF0597 protein CD630_32320 from Clostridioides difficile (strain 630) (Peptoclostridium difficile).